Here is a 429-residue protein sequence, read N- to C-terminus: MANVAVIGAQWGDEGKGKVVDWLASRADVVVRFQGGHNAGHTLVVGDQTYKLSLLPSGLVRGKLGIIGNGVVVDPEALLSEIARVSAQGLAVGPETLRIADNATLILPLHGAIDRAREQARGDSKIGTTGRGIGPAYEDKVARRAIRIADLAEPETLSAKLDELLLHHNTLLAGLGAETFEKQALLDQLLALAPKILPYAEPVWERLDEIKRAGQRILFEGAQAVMLDVDHGTYPFVTSSNTIAATAAGGSGMGPSAVDFVLGIAKAYSTRVGSGPFPTELFDETGELLGDRGHEFGTVTGRRRRCGWFDAVLVRQAVKVGGIQGLALTKLDVLDGLPELKICTGYQINGETFRRLPASPAAQAAAKPVYESMEGWSGSTQGARSWADLPAQAIKYVRRIEELTEVPVTLLSTSPDRDDTILVKDPFEG.

GTP contacts are provided by residues 12-18 (GDEGKGK) and 40-42 (GHT). The active-site Proton acceptor is D13. D13 and G40 together coordinate Mg(2+). IMP-binding positions include 13–16 (DEGK), 38–41 (NAGH), T129, R143, Q223, T238, and R302. The Proton donor role is filled by H41. 298 to 304 (TVTGRRR) provides a ligand contact to substrate. Residues R304, 330–332 (KLD), and 412–414 (STS) contribute to the GTP site.

The protein belongs to the adenylosuccinate synthetase family. In terms of assembly, homodimer. Mg(2+) serves as cofactor.

The protein resides in the cytoplasm. The catalysed reaction is IMP + L-aspartate + GTP = N(6)-(1,2-dicarboxyethyl)-AMP + GDP + phosphate + 2 H(+). Its pathway is purine metabolism; AMP biosynthesis via de novo pathway; AMP from IMP: step 1/2. In terms of biological role, plays an important role in the de novo pathway of purine nucleotide biosynthesis. Catalyzes the first committed step in the biosynthesis of AMP from IMP. This is Adenylosuccinate synthetase from Granulibacter bethesdensis (strain ATCC BAA-1260 / CGDNIH1).